The chain runs to 53 residues: Large ribosomal subunit protein bL32 (53 aa).

The disordered stretch occupies residues 1-27 (MAVQQNKKSRSRRDMRRSHDALTTAAV). Over residues 7–16 (KKSRSRRDMR) the composition is skewed to basic residues.

The protein belongs to the bacterial ribosomal protein bL32 family.

The chain is Large ribosomal subunit protein bL32 from Glaesserella parasuis serovar 5 (strain SH0165) (Haemophilus parasuis).